The following is a 219-amino-acid chain: Ribose-5-phosphate isomerase A (219 aa).

Residues 28-31, 81-84, and 94-97 contribute to the substrate site; these read TGST, DGAD, and KGGG. Catalysis depends on Glu103, which acts as the Proton acceptor. Substrate is bound at residue Lys121.

The protein belongs to the ribose 5-phosphate isomerase family. As to quaternary structure, homodimer.

It carries out the reaction aldehydo-D-ribose 5-phosphate = D-ribulose 5-phosphate. Its pathway is carbohydrate degradation; pentose phosphate pathway; D-ribose 5-phosphate from D-ribulose 5-phosphate (non-oxidative stage): step 1/1. Its function is as follows. Catalyzes the reversible conversion of ribose-5-phosphate to ribulose 5-phosphate. In Escherichia fergusonii (strain ATCC 35469 / DSM 13698 / CCUG 18766 / IAM 14443 / JCM 21226 / LMG 7866 / NBRC 102419 / NCTC 12128 / CDC 0568-73), this protein is Ribose-5-phosphate isomerase A.